We begin with the raw amino-acid sequence, 160 residues long: Nutritionally-regulated adipose and cardiac enriched protein homolog (160 aa).

The segment at 1 to 69 (MRTAAGAVSP…AKPQRTSRRV (69 aa)) is disordered. Composition is skewed to basic and acidic residues over residues 12–25 (SRPE…KNEE) and 33–42 (CRAEREDNRK). Residues 101–121 (GGSLLLQLCVCVLLVLALGLY) traverse the membrane as a helical segment.

It localises to the cell membrane. This Homo sapiens (Human) protein is Nutritionally-regulated adipose and cardiac enriched protein homolog (NRAC).